The primary structure comprises 578 residues: Glycosyltransferase family 92 protein RCOM_0530710 (578 aa).

A helical membrane pass occupies residues 21-43; the sequence is SFFSVRSLTACLSFFVFLLFISS. The GT92 domain maps to 295-531; that stretch reads YELCACTMLW…QNQGSKDRAP (237 aa).

The protein belongs to the glycosyltransferase 92 family.

It is found in the membrane. This is Glycosyltransferase family 92 protein RCOM_0530710 from Ricinus communis (Castor bean).